A 330-amino-acid polypeptide reads, in one-letter code: Protein RecA (330 aa).

ATP is bound at residue 66–73 (GPESSGKT).

Belongs to the RecA family.

The protein resides in the cytoplasm. Functionally, can catalyze the hydrolysis of ATP in the presence of single-stranded DNA, the ATP-dependent uptake of single-stranded DNA by duplex DNA, and the ATP-dependent hybridization of homologous single-stranded DNAs. It interacts with LexA causing its activation and leading to its autocatalytic cleavage. The chain is Protein RecA from Bacteroides thetaiotaomicron (strain ATCC 29148 / DSM 2079 / JCM 5827 / CCUG 10774 / NCTC 10582 / VPI-5482 / E50).